Reading from the N-terminus, the 435-residue chain is Indole diterpene prenyltransferase atmD (435 aa).

L-tryptophan contacts are provided by residues 81-82 (AY) and glutamate 90. Substrate is bound by residues arginine 103, lysine 190, arginine 261, lysine 263, tyrosine 265, tyrosine 346, and tyrosine 413.

It belongs to the tryptophan dimethylallyltransferase family.

Functionally, indole diterpene prenyltransferase; part of the ATM2 gene cluster that mediates the biosynthesis of aflatrem, a tremorgenic mycotoxin with acute neurotoxic effects. Synthesis of geranylgeranyl diphosphate (GGPP) by AtmG (a GGPP synthase) precedes condensation of GGPP with indole 3-glycerol phosphate, followed by epoxidation and cyclization by AtmM (a FAD-dependent monooxygenase) and AtmC (a prenyltransferase) to produce paspaline. AtmB is also essential for paspaline production, but its exact role has not been identified yet. AtmP, a cytochrome P450 monooxygenase, subsequently converts paspaline to 13-desoxypaxilline via PC-M6 by removal of the C-30 methyl group and oxidation at C-10. AtmQ, a cytochrome P450 monooxygenase, then catalyzes the oxidation of 13-desoxypaxilline, first at C-7 to produce paspalicine and then at C-13 to form paspalinine. Finally, AtmD prenylates paspalinine to form aflatrem. This chain is Indole diterpene prenyltransferase atmD, found in Aspergillus flavus.